The chain runs to 695 residues: Pre-mRNA-splicing factor clf-1 (695 aa).

HAT repeat units follow at residues 52 to 84, 86 to 118, 120 to 152, 154 to 185, 187 to 218, 220 to 259, 261 to 295, 305 to 337, 339 to 373, 383 to 419, 421 to 452, 454 to 486, 488 to 522, 524 to 555, 578 to 616, and 621 to 654; these read EYQG…WELE, KEFA…AEIK, RNIN…VMEM, GDIP…LEKR, GEFD…FEEE, GTSD…YEAR, REYE…FEKQ, VILT…LEES, GDVD…LFLF, KDIG…FEIR, GQLT…LEQK, YEFE…LERG, DDLE…FEEE, GEYE…FEIN, EAKA…FEKT, and EDIE…YIFP.

It belongs to the crooked-neck family. In terms of assembly, associated with the spliceosome.

It is found in the nucleus. Involved in pre-mRNA splicing and cell cycle progression. Required for the spliceosome assembly and initiation of the DNA replication. The chain is Pre-mRNA-splicing factor clf-1 (clf-1) from Neurospora crassa (strain ATCC 24698 / 74-OR23-1A / CBS 708.71 / DSM 1257 / FGSC 987).